The primary structure comprises 398 residues: Cyclin-dependent kinase D-1 (398 aa).

Residues 11 to 291 (YLKREVLGQG…IQQALKHRYF (281 aa)) form the Protein kinase domain. ATP contacts are provided by residues 17-25 (LGQGTYGVV) and K40. Y22 is subject to Phosphotyrosine. D133 functions as the Proton acceptor in the catalytic mechanism. Phosphoserine is present on S160. T166 carries the post-translational modification Phosphothreonine. Residues 296–318 (SPTDPLKLPRPVSKQDAKSSDSK) form a disordered region. Basic and acidic residues predominate over residues 308–318 (SKQDAKSSDSK).

Belongs to the protein kinase superfamily. CMGC Ser/Thr protein kinase family. CDC2/CDKX subfamily. Autophosphorylated. In terms of tissue distribution, expressed at low levels in suspension cell culture, but not in plant organs.

The protein localises to the nucleus. The enzyme catalyses L-seryl-[protein] + ATP = O-phospho-L-seryl-[protein] + ADP + H(+). It catalyses the reaction L-threonyl-[protein] + ATP = O-phospho-L-threonyl-[protein] + ADP + H(+). It carries out the reaction [DNA-directed RNA polymerase] + ATP = phospho-[DNA-directed RNA polymerase] + ADP + H(+). The sequence is that of Cyclin-dependent kinase D-1 (CDKD-1) from Arabidopsis thaliana (Mouse-ear cress).